The sequence spans 194 residues: Adenylate kinase (194 aa).

Residue 10-15 coordinates ATP; sequence GAGKGT. Residues 30–59 form an NMP region; it reads STGDMLRAAVKAETEIGKKAKAVMDAGELV. Residues Thr-31, Arg-36, 57–59, 85–88, and Gln-92 contribute to the AMP site; these read ELV and GYPR. The LID stretch occupies residues 126–142; it reads KRAEDAQAAGQPVRRDD. Residue Arg-127 coordinates ATP. Residues Arg-139 and Arg-150 each contribute to the AMP site. Ala-178 serves as a coordination point for ATP.

The protein belongs to the adenylate kinase family. As to quaternary structure, monomer.

It localises to the cytoplasm. It carries out the reaction AMP + ATP = 2 ADP. It functions in the pathway purine metabolism; AMP biosynthesis via salvage pathway; AMP from ADP: step 1/1. In terms of biological role, catalyzes the reversible transfer of the terminal phosphate group between ATP and AMP. Plays an important role in cellular energy homeostasis and in adenine nucleotide metabolism. This Chelativorans sp. (strain BNC1) protein is Adenylate kinase.